The chain runs to 106 residues: Heat shock protein HspQ (106 aa).

The segment at 80-106 (DEHLDNDSMDELSQSIRNQLQAPRLRN) is disordered. Over residues 90–100 (ELSQSIRNQLQ) the composition is skewed to polar residues.

This sequence belongs to the HspQ family.

It is found in the cytoplasm. In terms of biological role, involved in the degradation of certain denaturated proteins, including DnaA, during heat shock stress. In Proteus mirabilis (strain HI4320), this protein is Heat shock protein HspQ.